The following is a 434-amino-acid chain: MPIITDVYAREVLDSRGNPTVEVEVLTESGAFGRALVPSGASTGEHEAVELRDGDKSRYLGKGVTKAVENVNEIIAPEIIEGEFSVLDQVSIDKMMIALDGTPNKGKLGANAILGVSIAVARAAADLLGQPLYKYLGGFNGKQLPVPMMNIVNGGSHSDAPIAFQEFMILPVGATTFKESLRWGTEIFHNLKSILSKRGLETAVGDEGGFAPKFEGTEDAVETIIQAIEAAGYKPGEEVFLGFDCASSEFYENGVYDYSKFEGEHGAKRTAAEQVDYLEQLVDKYPIITIEDGMDENDWDGWKQLTERIGDRVQLVGDDLFVTNTEILAKGIENGIGNSILIKVNQIGTLTETFDAIEMAQKAGYTAVVSHRSGETEDTTIADIAVATNAGQIKTGSLSRTDRIAKYNQLLRIEDELFETAKYDGIKSFYNLDK.

Residue Q165 participates in (2R)-2-phosphoglycerate binding. E207 acts as the Proton donor in catalysis. Mg(2+)-binding residues include D244, E291, and D318. Residues K343, R372, S373, and K394 each coordinate (2R)-2-phosphoglycerate. The active-site Proton acceptor is K343.

It belongs to the enolase family. Mg(2+) serves as cofactor.

The protein localises to the cytoplasm. Its subcellular location is the secreted. It is found in the cell surface. The catalysed reaction is (2R)-2-phosphoglycerate = phosphoenolpyruvate + H2O. The protein operates within carbohydrate degradation; glycolysis; pyruvate from D-glyceraldehyde 3-phosphate: step 4/5. Functionally, catalyzes the reversible conversion of 2-phosphoglycerate (2-PG) into phosphoenolpyruvate (PEP). It is essential for the degradation of carbohydrates via glycolysis. The chain is Enolase from Staphylococcus aureus (strain USA300 / TCH1516).